The following is a 389-amino-acid chain: MLRFETAGESHGECLVATMNGLPAGIPISLETVNRELWRRQQGYGRGGRMKIETDKAEIVAGVRHSRTIGAPLAIIIRNKDWQNWTEILPVEDAGSGADRKPVTRPRPGHADLAGAIKYNFHDARYILERASARETTARVAVGAIAKALLAEFGIQVLSHVIAVGSVRLERAASWDELVALSLRDQVLLGCVDAETEARMKEVVDEAYRTGDTVGGVFEVVARGLPIGLGSHVTWDSRLDGRLAQAIVSMQAVKGVEVGFAAEGAASFGSKVQDTIHYDREAHHFTRGANRAGGIEGGMTNGQDILVRGMLKPISTLRRPLESVDLLTREPSPAAYERSDVCVVPAAGVIGEAMVAIVLAQAFLEKFGGDSLTETRRNFDSYLEQVKNY.

NADP(+)-binding residues include arginine 40 and arginine 46. FMN contacts are provided by residues 130-132 (RAS), 251-252 (QA), glycine 297, 312-316 (KPIST), and arginine 338.

The protein belongs to the chorismate synthase family. As to quaternary structure, homotetramer. Requires FMNH2 as cofactor.

The enzyme catalyses 5-O-(1-carboxyvinyl)-3-phosphoshikimate = chorismate + phosphate. The protein operates within metabolic intermediate biosynthesis; chorismate biosynthesis; chorismate from D-erythrose 4-phosphate and phosphoenolpyruvate: step 7/7. Its function is as follows. Catalyzes the anti-1,4-elimination of the C-3 phosphate and the C-6 proR hydrogen from 5-enolpyruvylshikimate-3-phosphate (EPSP) to yield chorismate, which is the branch point compound that serves as the starting substrate for the three terminal pathways of aromatic amino acid biosynthesis. This reaction introduces a second double bond into the aromatic ring system. This Solibacter usitatus (strain Ellin6076) protein is Chorismate synthase.